A 203-amino-acid polypeptide reads, in one-letter code: Histidine biosynthesis bifunctional protein HisIE (203 aa).

The tract at residues 1–114 (MLTEQQRREL…FGNTAHQWLF (114 aa)) is phosphoribosyl-AMP cyclohydrolase. A phosphoribosyl-ATP pyrophosphohydrolase region spans residues 115-203 (LYQLEQLLAE…VIENLHKRHQ (89 aa)).

The protein in the N-terminal section; belongs to the PRA-CH family. It in the C-terminal section; belongs to the PRA-PH family.

It localises to the cytoplasm. It carries out the reaction 1-(5-phospho-beta-D-ribosyl)-ATP + H2O = 1-(5-phospho-beta-D-ribosyl)-5'-AMP + diphosphate + H(+). The enzyme catalyses 1-(5-phospho-beta-D-ribosyl)-5'-AMP + H2O = 1-(5-phospho-beta-D-ribosyl)-5-[(5-phospho-beta-D-ribosylamino)methylideneamino]imidazole-4-carboxamide. The protein operates within amino-acid biosynthesis; L-histidine biosynthesis; L-histidine from 5-phospho-alpha-D-ribose 1-diphosphate: step 2/9. Its pathway is amino-acid biosynthesis; L-histidine biosynthesis; L-histidine from 5-phospho-alpha-D-ribose 1-diphosphate: step 3/9. The protein is Histidine biosynthesis bifunctional protein HisIE (hisI) of Shigella flexneri.